Here is a 205-residue protein sequence, read N- to C-terminus: Large ribosomal subunit protein uL18 (205 aa).

The protein belongs to the universal ribosomal protein uL18 family. As to quaternary structure, part of the 50S ribosomal subunit. Contacts the 5S and 23S rRNAs.

Its function is as follows. This is one of the proteins that bind and probably mediate the attachment of the 5S RNA into the large ribosomal subunit, where it forms part of the central protuberance. The polypeptide is Large ribosomal subunit protein uL18 (Pyrobaculum neutrophilum (strain DSM 2338 / JCM 9278 / NBRC 100436 / V24Sta) (Thermoproteus neutrophilus)).